The chain runs to 543 residues: MAKRIIYNENARRALEKGIDILAEAVAVTLGPKGRNVVLEKKFGAPQIINDGVTIAKEIELEDHIENTGVALIRQAASKTNDAAGDGTTTATVLAHAMVKAGLRNVAAGANAITLKKGIDKASDFLVGKIQENAKPIADSNAIAQVGTISAGNDEEVGKMIADAMDKVGKEGVISLEEGKSMETELEVTEGMRFDKGYISPYFATDTERMEAVLDEPYILLTDKKIGLVQDLVPVLEQIARTGKPLLIIAEDIEKEALATLVVNRLRGVLNVAAVKAPGFGDRRKAMIEDMAVLTNGQLITEDQGLKLENAKLEMLGTARRVTINKDTTTIVAEGNEVAVSTRCEQIKKQMDETDSTYDKEKLQERLAKLAGGVAVVKVGAATETEMKDKKLRLEDAINATKAAVEEGIVPGGGTTLAHMAPALEEWAASNLSGEELIGANIVASALTAPLMRIAENAGVNGAVVAENVKSKSFNEGYNAANGEYVDMLSAGIVDPAKVTRSGLQNAASIAGMVLTTECIVADMPEKKEAAAAGGGMGGDFDY.

ATP contacts are provided by residues 29–32 (TLGP), 86–90 (DGTTT), glycine 413, 479–481 (NAA), and aspartate 495.

This sequence belongs to the chaperonin (HSP60) family. In terms of assembly, forms a cylinder of 14 subunits composed of two heptameric rings stacked back-to-back. Interacts with the co-chaperonin GroES.

It is found in the cytoplasm. It carries out the reaction ATP + H2O + a folded polypeptide = ADP + phosphate + an unfolded polypeptide.. Functionally, together with its co-chaperonin GroES, plays an essential role in assisting protein folding. The GroEL-GroES system forms a nano-cage that allows encapsulation of the non-native substrate proteins and provides a physical environment optimized to promote and accelerate protein folding. The chain is Chaperonin GroEL 2 from Synechococcus sp. (strain CC9311).